We begin with the raw amino-acid sequence, 277 residues long: Tryptophan synthase alpha chain (277 aa).

Active-site proton acceptor residues include glutamate 50 and aspartate 61.

This sequence belongs to the TrpA family. Tetramer of two alpha and two beta chains.

The catalysed reaction is (1S,2R)-1-C-(indol-3-yl)glycerol 3-phosphate + L-serine = D-glyceraldehyde 3-phosphate + L-tryptophan + H2O. It participates in amino-acid biosynthesis; L-tryptophan biosynthesis; L-tryptophan from chorismate: step 5/5. Functionally, the alpha subunit is responsible for the aldol cleavage of indoleglycerol phosphate to indole and glyceraldehyde 3-phosphate. This chain is Tryptophan synthase alpha chain, found in Beijerinckia indica subsp. indica (strain ATCC 9039 / DSM 1715 / NCIMB 8712).